The primary structure comprises 292 residues: Pyridoxal 5'-phosphate synthase subunit PdxS (292 aa).

Residue Asp22 coordinates D-ribose 5-phosphate. The active-site Schiff-base intermediate with D-ribose 5-phosphate is Lys79. Gly151 contributes to the D-ribose 5-phosphate binding site. Position 163 (Arg163) interacts with D-glyceraldehyde 3-phosphate. D-ribose 5-phosphate-binding positions include Gly212 and Gly233–Ser234.

This sequence belongs to the PdxS/SNZ family. In the presence of PdxT, forms a dodecamer of heterodimers.

It carries out the reaction aldehydo-D-ribose 5-phosphate + D-glyceraldehyde 3-phosphate + L-glutamine = pyridoxal 5'-phosphate + L-glutamate + phosphate + 3 H2O + H(+). It participates in cofactor biosynthesis; pyridoxal 5'-phosphate biosynthesis. Functionally, catalyzes the formation of pyridoxal 5'-phosphate from ribose 5-phosphate (RBP), glyceraldehyde 3-phosphate (G3P) and ammonia. The ammonia is provided by the PdxT subunit. Can also use ribulose 5-phosphate and dihydroxyacetone phosphate as substrates, resulting from enzyme-catalyzed isomerization of RBP and G3P, respectively. This is Pyridoxal 5'-phosphate synthase subunit PdxS from Caldanaerobacter subterraneus subsp. tengcongensis (strain DSM 15242 / JCM 11007 / NBRC 100824 / MB4) (Thermoanaerobacter tengcongensis).